Consider the following 310-residue polypeptide: 5-oxoprolinase subunit C (310 aa).

Belongs to the PxpC family. In terms of assembly, forms a complex composed of PxpA, PxpB and PxpC.

The enzyme catalyses 5-oxo-L-proline + ATP + 2 H2O = L-glutamate + ADP + phosphate + H(+). Its function is as follows. Catalyzes the cleavage of 5-oxoproline to form L-glutamate coupled to the hydrolysis of ATP to ADP and inorganic phosphate. This chain is 5-oxoprolinase subunit C, found in Escherichia coli (strain K12).